Consider the following 800-residue polypeptide: Putative antiporter subunit mnhA2 (800 aa).

A run of 20 helical transmembrane segments spans residues 1–21 (MSLV…LLMS), 33–53 (IALV…PSVA), 78–98 (GLSL…FFYA), 118–138 (LFMF…MYIF), 167–187 (FMIT…LYIM), 207–227 (GLFI…SAQF), 241–261 (TPVS…FLLL), 273–293 (YIYI…ITAL), 300–320 (GILA…VGIG), 331–351 (IASI…NHAI), 387–407 (LVMT…GFLS), 424–444 (FSLI…IFTF), 472–492 (PWLF…IFFV), 527–547 (GFNI…VLAI), 595–615 (IIMT…RIGL), 627–647 (GALE…LIFI), 651–671 (LTMV…FIAM), 676–696 (LALT…VSFS), 712–732 (IIKI…IFIT), and 768–788 (LDTL…YTLL).

The protein belongs to the CPA3 antiporters (TC 2.A.63) subunit A family. May form a heterooligomeric complex that consists of seven subunits: mnhA2, mnhB2, mnhC2, mnhD2, mnhE2, mnhF2 and mnhG2.

The protein localises to the cell membrane. This chain is Putative antiporter subunit mnhA2 (mnhA2), found in Staphylococcus aureus (strain Mu3 / ATCC 700698).